The sequence spans 2135 residues: Plexin-B1 (2135 aa).

Positions 1–19 are cleaved as a signal peptide; it reads MPALGPALLQALWAGWVLT. The Sema domain maps to 20–479; that stretch reads LQPLPPTAFT…TQSTLLKVPV (460 aa). Topologically, residues 20 to 1490 are extracellular; it reads LQPLPPTAFT…SPGAFPVAAQ (1471 aa). Asparagine 31 carries N-linked (GlcNAc...) asparagine glycosylation. Disulfide bonds link cysteine 79–cysteine 88, cysteine 111–cysteine 119, cysteine 252–cysteine 377, cysteine 268–cysteine 322, cysteine 340–cysteine 364, cysteine 482–cysteine 499, cysteine 488–cysteine 533, cysteine 491–cysteine 508, and cysteine 502–cysteine 514. An N-linked (GlcNAc...) asparagine glycan is attached at asparagine 334. Asparagine 543 carries an N-linked (GlcNAc...) asparagine glycan. Cysteine 570 and cysteine 588 are disulfide-bonded. Disordered regions lie at residues 671 to 829 and 849 to 884; these read MVAS…TTFP and LPEA…PPAP. Over residues 681-697 the composition is skewed to pro residues; the sequence is SPDPPARGGPSPSPPTA. Composition is skewed to low complexity over residues 698 to 710 and 734 to 754; these read PKAL…DTLP and SPWG…TGSP. IPT/TIG domains lie at 1070–1160, 1162–1249, and 1252–1375; these read PLIH…FAYQ, PKVH…FKYT, and PNIT…FSYE. N-linked (GlcNAc...) asparagine glycans are attached at residues asparagine 1183, asparagine 1253, and asparagine 1330. Residues 1491–1511 traverse the membrane as a helical segment; that stretch reads VGLGVGTSLLALGVIIIVLMY. A coiled-coil region spans residues 1507–1539; it reads IVLMYRRKSKQALRDYKKVQIQLENLESSVRDR. Over 1512–2135 the chain is Cytoplasmic; that stretch reads RRKSKQALRD…AAVENKVTDL (624 aa). A disordered region spans residues 1883-1908; the sequence is PWHLVKPSDEPEPPRPRRGSLRGGER. Positions 1888 to 1897 are enriched in basic and acidic residues; the sequence is KPSDEPEPPR.

The protein belongs to the plexin family. In terms of assembly, monomer, and heterodimer with PLXNB2 after proteolytic processing. Binds RAC1 that has been activated by GTP binding. Interaction with SEMA4D promotes binding of cytoplasmic ligands. Interacts with PLXNA1. Interacts with ARHGEF11 and ARHGEF12. Interacts with ERBB2. Interacts with MET. Interacts with MST1R. Interacts with RRAS. Interacts with RHOD. Interacts with RND1. Interacts with NRP1 and NRP2. In terms of processing, phosphorylated on tyrosine residues by ERBB2 and MET upon SEMA4D binding. Post-translationally, proteolytic processing favors heterodimerization with PLXNB2 and SEMA4D binding. As to expression, highly expressed in fetal kidney, and at slightly lower levels in fetal brain, lung and liver.

It is found in the cell membrane. Its subcellular location is the secreted. Its function is as follows. Receptor for SEMA4D. Plays a role in GABAergic synapse development. Mediates SEMA4A- and SEMA4D-dependent inhibitory synapse development. Plays a role in RHOA activation and subsequent changes of the actin cytoskeleton. Plays a role in axon guidance, invasive growth and cell migration. This is Plexin-B1 (PLXNB1) from Homo sapiens (Human).